The primary structure comprises 355 residues: C-C chemokine receptor type 1 (355 aa).

Residues 1-34 (MEISDFTEAYPTTTEFDYGDSTPCQKTAVRAFGA) lie on the Extracellular side of the membrane. The chain crosses the membrane as a helical span at residues 35 to 60 (GLLPPLYSLVFIIGVVGNVLVILVLM). Over 61–64 (QHRR) the chain is Cytoplasmic. Residues 65–91 (LQSMTSIYLFNLAVSDLVFLFTLPFWI) form a helical membrane-spanning segment. At 92-107 (DYKLKDDWIFGDAMCK) the chain is on the extracellular side. An intrachain disulfide couples Cys106 to Cys183. Residues 108–129 (LLSGFYYLGLYSEIFFIILLTI) form a helical membrane-spanning segment. At 130-146 (DRYLAIVHAVFALRART) the chain is on the cytoplasmic side. Residues 147–171 (VTFGIITSIITWALAILASMPALYF) traverse the membrane as a helical segment. Over 172 to 197 (FKAQWEFTHRTCSPHFPYKSLKQWKR) the chain is Extracellular. The chain crosses the membrane as a helical span at residues 198–223 (FQALKLNLLGLILPLLVMIICYAGII). Topologically, residues 224 to 239 (RILLRRPSEKKVKAVR) are cytoplasmic. The chain crosses the membrane as a helical span at residues 240-264 (LIFAITLLFFLLWTPYNLSVFVSAF). Topologically, residues 265–281 (QDVLFTNQCEQSKQLDL) are extracellular. The helical transmembrane segment at 282–305 (AMQVTEVIAYTHCCVNPIIYVFVG) threads the bilayer. Topologically, residues 306-355 (ERFWKYLRQLFQRHVAIPLAKWLPFLSVDQLERTSSISPSTGEHELSAGF) are cytoplasmic.

This sequence belongs to the G-protein coupled receptor 1 family. In terms of assembly, interacts with CREB3. Interacts with CCL3. Interacts with CCL15. Interacts with CCL23. Interacts with GNAI1. Interacts with PF4/CXCL4. In terms of tissue distribution, detected in the heart, spleen, lung, peritoneal exudate cells and leukocytes.

Its subcellular location is the cell membrane. In terms of biological role, chemokine receptor that plays a crucial role in regulating immune cell migration, inflammation, and immune responses. Contributes to the inflammatory response by recruiting immune cells, such as monocytes, macrophages, T-cells, and dendritic cells, to sites of inflammation for the clearance of pathogens and the resolution of tissue damage. When activated by its ligands including CCL3, CCL5-9, CCL13-16 and CCL23, triggers a signaling cascade within immune cells, leading to their migration towards the source of the chemokine. For example, mediates neutrophil migration after activation by CCL3 leading to the sequential release of TNF-alpha and leukotriene B4. Also mediates monocyte migration upon CXCL4 binding. Activation by CCL5 results in neuroinflammation through the ERK1/2 signaling pathway. This chain is C-C chemokine receptor type 1 (Ccr1), found in Mus musculus (Mouse).